We begin with the raw amino-acid sequence, 274 residues long: Undecaprenyl-diphosphatase (274 aa).

The next 7 membrane-spanning stretches (helical) occupy residues 4 to 24, 41 to 61, 83 to 103, 108 to 128, 184 to 204, 218 to 238, and 246 to 266; these read PLFV…FLPI, DATS…AVCW, FVGL…MFHS, LLFN…LILW, AAEF…VYDL, VFAI…KAFI, and FIAF…TWQL.

The protein belongs to the UppP family.

The protein localises to the cell inner membrane. It catalyses the reaction di-trans,octa-cis-undecaprenyl diphosphate + H2O = di-trans,octa-cis-undecaprenyl phosphate + phosphate + H(+). Functionally, catalyzes the dephosphorylation of undecaprenyl diphosphate (UPP). Confers resistance to bacitracin. The protein is Undecaprenyl-diphosphatase of Aromatoleum aromaticum (strain DSM 19018 / LMG 30748 / EbN1) (Azoarcus sp. (strain EbN1)).